We begin with the raw amino-acid sequence, 264 residues long: MESWLLRRGARVRCLHPPSWLPAWCFLCLLPVPQTLQLTGLVSLTHTSLPIMVSLANTDVFFSCRIEDFTRLQRDLPVKLFHTDIHGRRRWEKQINCQHRPGMENHTRDCMVKLSQANTSATGIYYFIVEGEETYQSDGVVILVRDTVYQPPAFKVQEALMLGFTSLMSVLGVLGTALLLWKKKQISVLGKHTAKTCSGLKSTVGTTKPPAESVYTSLQRRETEVYACMKEETGSPVFSQSPATKEKLNRFEDDNEFNLVYENL.

A signal peptide spans 1–37 (MESWLLRRGARVRCLHPPSWLPAWCFLCLLPVPQTLQ). Residues 38 to 159 (LTGLVSLTHT…QPPAFKVQEA (122 aa)) lie on the Extracellular side of the membrane. Positions 49 to 145 (LPIMVSLANT…QSDGVVILVR (97 aa)) constitute an Ig-like V-type domain. Cys-64 and Cys-110 form a disulfide bridge. N-linked (GlcNAc...) asparagine glycans are attached at residues Asn-105 and Asn-118. A helical transmembrane segment spans residues 160–180 (LMLGFTSLMSVLGVLGTALLL). Topologically, residues 181-264 (WKKKQISVLG…NEFNLVYENL (84 aa)) are cytoplasmic. The 21-residue stretch at 212–232 (ESVYTSLQRRETEVYACMKEE) folds into the ITAM domain. Tyr-215 and Tyr-226 each carry phosphotyrosine.

As to quaternary structure, no direct interaction with the B-cell antigen receptor (BCR). Interacts with SYK; probably involved in BCR signaling. Interacts with ZAP70. Post-translationally, N-glycosylated. As to expression, highly expressed in the spleen, expressed by both B- and CD4+ and CD8+ T-cells, as well as non-T- and non-B-cells, including macrophages and neutrophils. Expressed at low levels, if any, in non-immune tissue.

It is found in the cell membrane. May function in immune system as a receptor which activates via the calcineurin/NFAT-signaling pathway the downstream cytokine gene promoters. Activates the transcription of IL-13 and TNF-alpha promoters. May be involved in the regulation of B-cell, but not T-cell, development. In Mus musculus (Mouse), this protein is NFAT activation molecule 1 (Nfam1).